Reading from the N-terminus, the 376-residue chain is Succinyl-diaminopimelate desuccinylase (376 aa).

His-66 contributes to the Zn(2+) binding site. Residue Asp-68 is part of the active site. Position 99 (Asp-99) interacts with Zn(2+). The Proton acceptor role is filled by Glu-133. Zn(2+) is bound by residues Glu-134, Glu-162, and His-349.

It belongs to the peptidase M20A family. DapE subfamily. In terms of assembly, homodimer. Requires Zn(2+) as cofactor. Co(2+) serves as cofactor.

The enzyme catalyses N-succinyl-(2S,6S)-2,6-diaminopimelate + H2O = (2S,6S)-2,6-diaminopimelate + succinate. Its pathway is amino-acid biosynthesis; L-lysine biosynthesis via DAP pathway; LL-2,6-diaminopimelate from (S)-tetrahydrodipicolinate (succinylase route): step 3/3. Functionally, catalyzes the hydrolysis of N-succinyl-L,L-diaminopimelic acid (SDAP), forming succinate and LL-2,6-diaminopimelate (DAP), an intermediate involved in the bacterial biosynthesis of lysine and meso-diaminopimelic acid, an essential component of bacterial cell walls. The polypeptide is Succinyl-diaminopimelate desuccinylase (Buchnera aphidicola subsp. Cinara cedri (strain Cc)).